A 380-amino-acid chain; its full sequence is O-phospho-L-seryl-tRNA:Cys-tRNA synthase (380 aa).

Pyridoxal 5'-phosphate is bound by residues 86 to 87 (AR), Asn192, and 215 to 217 (SGH). Lys218 carries the post-translational modification N6-(pyridoxal phosphate)lysine.

Belongs to the SepCysS family. Homodimer. Interacts with SepRS. It depends on pyridoxal 5'-phosphate as a cofactor.

It catalyses the reaction O-phospho-L-seryl-tRNA(Cys) + hydrogen sulfide + H(+) = L-cysteinyl-tRNA(Cys) + phosphate. In terms of biological role, converts O-phospho-L-seryl-tRNA(Cys) (Sep-tRNA(Cys)) to L-cysteinyl-tRNA(Cys) (Cys-tRNA(Cys)). This Methanococcus maripaludis (strain C5 / ATCC BAA-1333) protein is O-phospho-L-seryl-tRNA:Cys-tRNA synthase.